The following is a 66-amino-acid chain: Large ribosomal subunit protein bL35 (66 aa).

Over residues 1-28 (MPKMKTHRGSAKRFKRTGSGKLKRRHGF) the composition is skewed to basic residues. The segment at 1-50 (MPKMKTHRGSAKRFKRTGSGKLKRRHGFTSHMFANKSQKQKRKLRKSAMV) is disordered.

This sequence belongs to the bacterial ribosomal protein bL35 family.

The sequence is that of Large ribosomal subunit protein bL35 from Listeria monocytogenes serotype 4a (strain HCC23).